We begin with the raw amino-acid sequence, 161 residues long: MTVLEIDLLDETKNLLDEDKQLVENILQFAAEYLKIEQGTELSLTFTTNEGIREINREYRDKDQATDVISFALEEMGDGETEIDWGEFDLETPRMLGDIIISTEKAEEQAKDYGHTKARELGFLAVHGLLHLLGYDHMEPDEEKIMFGLQKEVLDAYGLER.

Positions 127, 131, and 137 each coordinate Zn(2+).

This sequence belongs to the endoribonuclease YbeY family. It depends on Zn(2+) as a cofactor.

It is found in the cytoplasm. In terms of biological role, single strand-specific metallo-endoribonuclease involved in late-stage 70S ribosome quality control and in maturation of the 3' terminus of the 16S rRNA. In Listeria monocytogenes serotype 4b (strain CLIP80459), this protein is Endoribonuclease YbeY.